Reading from the N-terminus, the 255-residue chain is tRNA (guanine-N(1)-)-methyltransferase (255 aa).

Residues Gly113 and 133–138 (IGDYVL) contribute to the S-adenosyl-L-methionine site.

It belongs to the RNA methyltransferase TrmD family. Homodimer.

The protein resides in the cytoplasm. The catalysed reaction is guanosine(37) in tRNA + S-adenosyl-L-methionine = N(1)-methylguanosine(37) in tRNA + S-adenosyl-L-homocysteine + H(+). Specifically methylates guanosine-37 in various tRNAs. The protein is tRNA (guanine-N(1)-)-methyltransferase of Chloroflexus aggregans (strain MD-66 / DSM 9485).